The chain runs to 236 residues: Small ribosomal subunit protein uS2c (236 aa).

Belongs to the universal ribosomal protein uS2 family.

It is found in the plastid. The protein resides in the chloroplast. This is Small ribosomal subunit protein uS2c (rps2) from Lepidium virginicum (Virginia pepperweed).